We begin with the raw amino-acid sequence, 287 residues long: tRNA pseudouridine synthase B (287 aa).

Asp37 serves as the catalytic Nucleophile.

Belongs to the pseudouridine synthase TruB family. Type 1 subfamily.

It carries out the reaction uridine(55) in tRNA = pseudouridine(55) in tRNA. In terms of biological role, responsible for synthesis of pseudouridine from uracil-55 in the psi GC loop of transfer RNAs. In Caldicellulosiruptor saccharolyticus (strain ATCC 43494 / DSM 8903 / Tp8T 6331), this protein is tRNA pseudouridine synthase B.